Here is a 177-residue protein sequence, read N- to C-terminus: Isopentenyl-diphosphate Delta-isomerase (177 aa).

Mn(2+) contacts are provided by His-22 and His-28. The 135-residue stretch at 26 to 160 (LRHMAISVFV…PERFTPWLRI (135 aa)) folds into the Nudix hydrolase domain. Residue Cys-62 is part of the active site. His-64 lines the Mn(2+) pocket. Residue Glu-82 coordinates Mg(2+). The Mn(2+) site is built by Glu-108 and Glu-110. The active site involves Glu-110.

The protein belongs to the IPP isomerase type 1 family. It depends on Mg(2+) as a cofactor. Requires Mn(2+) as cofactor.

The protein resides in the cytoplasm. It carries out the reaction isopentenyl diphosphate = dimethylallyl diphosphate. Its pathway is isoprenoid biosynthesis; dimethylallyl diphosphate biosynthesis; dimethylallyl diphosphate from isopentenyl diphosphate: step 1/1. It functions in the pathway porphyrin-containing compound metabolism; chlorophyll biosynthesis. Its function is as follows. Catalyzes the 1,3-allylic rearrangement of the homoallylic substrate isopentenyl (IPP) to its highly electrophilic allylic isomer, dimethylallyl diphosphate (DMAPP). The chain is Isopentenyl-diphosphate Delta-isomerase from Cereibacter sphaeroides (strain ATCC 17029 / ATH 2.4.9) (Rhodobacter sphaeroides).